The chain runs to 210 residues: Orotate phosphoribosyltransferase (210 aa).

5-phospho-alpha-D-ribose 1-diphosphate-binding positions include R96, K100, H102, and 122–130 (EDLISTGGS). S126 contributes to the orotate binding site.

The protein belongs to the purine/pyrimidine phosphoribosyltransferase family. PyrE subfamily. Homodimer. Requires Mg(2+) as cofactor.

It carries out the reaction orotidine 5'-phosphate + diphosphate = orotate + 5-phospho-alpha-D-ribose 1-diphosphate. The protein operates within pyrimidine metabolism; UMP biosynthesis via de novo pathway; UMP from orotate: step 1/2. Functionally, catalyzes the transfer of a ribosyl phosphate group from 5-phosphoribose 1-diphosphate to orotate, leading to the formation of orotidine monophosphate (OMP). The protein is Orotate phosphoribosyltransferase of Streptococcus pneumoniae (strain ATCC BAA-255 / R6).